The chain runs to 95 residues: Glutamyl-tRNA(Gln) amidotransferase subunit C (95 aa).

It belongs to the GatC family. In terms of assembly, heterotrimer of A, B and C subunits.

The catalysed reaction is L-glutamyl-tRNA(Gln) + L-glutamine + ATP + H2O = L-glutaminyl-tRNA(Gln) + L-glutamate + ADP + phosphate + H(+). The enzyme catalyses L-aspartyl-tRNA(Asn) + L-glutamine + ATP + H2O = L-asparaginyl-tRNA(Asn) + L-glutamate + ADP + phosphate + 2 H(+). Its function is as follows. Allows the formation of correctly charged Asn-tRNA(Asn) or Gln-tRNA(Gln) through the transamidation of misacylated Asp-tRNA(Asn) or Glu-tRNA(Gln) in organisms which lack either or both of asparaginyl-tRNA or glutaminyl-tRNA synthetases. The reaction takes place in the presence of glutamine and ATP through an activated phospho-Asp-tRNA(Asn) or phospho-Glu-tRNA(Gln). The sequence is that of Glutamyl-tRNA(Gln) amidotransferase subunit C from Caulobacter vibrioides (strain ATCC 19089 / CIP 103742 / CB 15) (Caulobacter crescentus).